A 378-amino-acid chain; its full sequence is ATP phosphoribosyltransferase regulatory subunit (378 aa).

This sequence belongs to the class-II aminoacyl-tRNA synthetase family. HisZ subfamily. In terms of assembly, heteromultimer composed of HisG and HisZ subunits.

The protein localises to the cytoplasm. It participates in amino-acid biosynthesis; L-histidine biosynthesis; L-histidine from 5-phospho-alpha-D-ribose 1-diphosphate: step 1/9. Required for the first step of histidine biosynthesis. May allow the feedback regulation of ATP phosphoribosyltransferase activity by histidine. The sequence is that of ATP phosphoribosyltransferase regulatory subunit from Brucella abortus (strain 2308).